The primary structure comprises 318 residues: Acetyl-coenzyme A carboxylase carboxyl transferase subunit beta (318 aa).

The 270-residue stretch at 25–294 (LWSKCSECGT…AVKGELPAPA (270 aa)) folds into the CoA carboxyltransferase N-terminal domain. Positions 29, 32, 48, and 51 each coordinate Zn(2+). The segment at 29-51 (CSECGTMLFHRELSDNLNVCTNC) adopts a C4-type zinc-finger fold. A disordered region spans residues 286–318 (VKGELPAPAPLESDAETALASDTDPNGAPPSKD).

The protein belongs to the AccD/PCCB family. Acetyl-CoA carboxylase is a heterohexamer composed of biotin carboxyl carrier protein (AccB), biotin carboxylase (AccC) and two subunits each of ACCase subunit alpha (AccA) and ACCase subunit beta (AccD). It depends on Zn(2+) as a cofactor.

It is found in the cytoplasm. It carries out the reaction N(6)-carboxybiotinyl-L-lysyl-[protein] + acetyl-CoA = N(6)-biotinyl-L-lysyl-[protein] + malonyl-CoA. It functions in the pathway lipid metabolism; malonyl-CoA biosynthesis; malonyl-CoA from acetyl-CoA: step 1/1. Functionally, component of the acetyl coenzyme A carboxylase (ACC) complex. Biotin carboxylase (BC) catalyzes the carboxylation of biotin on its carrier protein (BCCP) and then the CO(2) group is transferred by the transcarboxylase to acetyl-CoA to form malonyl-CoA. The protein is Acetyl-coenzyme A carboxylase carboxyl transferase subunit beta of Jannaschia sp. (strain CCS1).